Here is a 228-residue protein sequence, read N- to C-terminus: Aspartate racemase (228 aa).

A substrate-binding site is contributed by 47 to 49; that stretch reads DRT. The active-site Proton donor/acceptor is the Cys-82. Substrate-binding positions include 83 to 85 and Lys-164; that span reads NTA. The active-site Proton donor/acceptor is the Cys-194.

This sequence belongs to the aspartate/glutamate racemases family. In terms of assembly, homodimer. The existence of the interchain disulfide bond seen in the crystal structures is uncertain, but disulfide bonds have been reported for cytoplasmic proteins from thermophiles.

The catalysed reaction is L-aspartate = D-aspartate. Its activity is regulated as follows. Weakly inhibited by citrate, but not by asparagine. This chain is Aspartate racemase, found in Pyrococcus horikoshii (strain ATCC 700860 / DSM 12428 / JCM 9974 / NBRC 100139 / OT-3).